The following is a 394-amino-acid chain: 1-deoxy-D-xylulose 5-phosphate reductoisomerase (394 aa).

Positions 10, 11, 12, 13, 38, 39, 40, and 123 each coordinate NADPH. Lys-124 is a 1-deoxy-D-xylulose 5-phosphate binding site. Glu-125 contacts NADPH. Asp-149 contributes to the Mn(2+) binding site. 4 residues coordinate 1-deoxy-D-xylulose 5-phosphate: Ser-150, Glu-151, Ser-175, and His-198. Glu-151 contacts Mn(2+). An NADPH-binding site is contributed by Gly-204. The 1-deoxy-D-xylulose 5-phosphate site is built by Ser-211, Asn-216, Lys-217, and Glu-220. Residue Glu-220 coordinates Mn(2+).

It belongs to the DXR family. Mg(2+) serves as cofactor. Mn(2+) is required as a cofactor.

It catalyses the reaction 2-C-methyl-D-erythritol 4-phosphate + NADP(+) = 1-deoxy-D-xylulose 5-phosphate + NADPH + H(+). Its pathway is isoprenoid biosynthesis; isopentenyl diphosphate biosynthesis via DXP pathway; isopentenyl diphosphate from 1-deoxy-D-xylulose 5-phosphate: step 1/6. Its function is as follows. Catalyzes the NADPH-dependent rearrangement and reduction of 1-deoxy-D-xylulose-5-phosphate (DXP) to 2-C-methyl-D-erythritol 4-phosphate (MEP). The sequence is that of 1-deoxy-D-xylulose 5-phosphate reductoisomerase from Cereibacter sphaeroides (strain ATCC 17025 / ATH 2.4.3) (Rhodobacter sphaeroides).